A 648-amino-acid polypeptide reads, in one-letter code: DNA ligase (648 aa).

Residues 30–34 (DEEYD), 79–80 (SM), and glutamate 108 each bind NAD(+). Catalysis depends on lysine 110, which acts as the N6-AMP-lysine intermediate. 4 residues coordinate NAD(+): arginine 131, glutamate 165, lysine 280, and lysine 304. Zn(2+) contacts are provided by cysteine 398, cysteine 401, cysteine 414, and cysteine 419. In terms of domain architecture, BRCT spans 573–648 (AKENPFKGKI…LTEDEMRAML (76 aa)).

Belongs to the NAD-dependent DNA ligase family. LigA subfamily. Mg(2+) is required as a cofactor. Mn(2+) serves as cofactor.

It carries out the reaction NAD(+) + (deoxyribonucleotide)n-3'-hydroxyl + 5'-phospho-(deoxyribonucleotide)m = (deoxyribonucleotide)n+m + AMP + beta-nicotinamide D-nucleotide.. Its function is as follows. DNA ligase that catalyzes the formation of phosphodiester linkages between 5'-phosphoryl and 3'-hydroxyl groups in double-stranded DNA using NAD as a coenzyme and as the energy source for the reaction. It is essential for DNA replication and repair of damaged DNA. In Sulfurovum sp. (strain NBC37-1), this protein is DNA ligase.